A 104-amino-acid chain; its full sequence is Turripeptide OL55 (104 aa).

In terms of processing, contains 8 disulfide bonds. As to expression, expressed by the venom duct.

The protein resides in the secreted. Its function is as follows. Acts as a neurotoxin by inhibiting an ion channel. This is Turripeptide OL55 from Iotyrris olangoensis (Sea snail).